The sequence spans 324 residues: DnaJ homolog subfamily B member 2 (324 aa).

Ala2 carries the N-acetylalanine modification. One can recognise a J domain in the interval 3–69 (SYYEILDVPR…HKREIYDRYG (67 aa)). Disordered regions lie at residues 70–91 (REGL…AGPG) and 218–324 (LSRR…CHIL). 2 UIM domains span residues 207–226 (GVPD…QQPS) and 250–269 (SEDE…MEAA). The residue at position 311 (Ser311) is a Phosphoserine. Basic and acidic residues predominate over residues 314–324 (SEEKASRCHIL). Cysteine methyl ester is present on Cys321. Cys321 carries the S-geranylgeranyl cysteine lipid modification. The CAAX motif motif lies at 321–324 (CHIL). A propeptide spans 322 to 324 (HIL) (removed in mature form).

In terms of assembly, interacts with HSP70 (HSPA1A or HSPA1B). Interacts with HSPA8/Hsc70. Interacts with PSMA3 and most probably with the whole proteasomal complex. Ubiquitinated by STUB1; does not lead to proteasomal degradation.

The protein localises to the cytoplasm. It is found in the nucleus. It localises to the endoplasmic reticulum membrane. Its function is as follows. Functions as a co-chaperone, regulating the substrate binding and activating the ATPase activity of chaperones of the HSP70/heat shock protein 70 family. In parallel, also contributes to the ubiquitin-dependent proteasomal degradation of misfolded proteins. Thereby, may regulate the aggregation and promote the functional recovery of misfolded proteins like HTT, MC4R, PRKN, RHO and SOD1 and be crucial for many biological processes. Isoform 1 which is localized to the endoplasmic reticulum membranes may specifically function in ER-associated protein degradation of misfolded proteins. This chain is DnaJ homolog subfamily B member 2, found in Mus musculus (Mouse).